Consider the following 200-residue polypeptide: 3-isopropylmalate dehydratase small subunit (200 aa).

This sequence belongs to the LeuD family. LeuD type 1 subfamily. Heterodimer of LeuC and LeuD.

The catalysed reaction is (2R,3S)-3-isopropylmalate = (2S)-2-isopropylmalate. Its pathway is amino-acid biosynthesis; L-leucine biosynthesis; L-leucine from 3-methyl-2-oxobutanoate: step 2/4. In terms of biological role, catalyzes the isomerization between 2-isopropylmalate and 3-isopropylmalate, via the formation of 2-isopropylmaleate. This chain is 3-isopropylmalate dehydratase small subunit, found in Sodalis glossinidius (strain morsitans).